The following is a 101-amino-acid chain: Putative septation protein SpoVG (101 aa).

Belongs to the SpoVG family.

Its function is as follows. Could be involved in septation. The sequence is that of Putative septation protein SpoVG from Staphylococcus saprophyticus subsp. saprophyticus (strain ATCC 15305 / DSM 20229 / NCIMB 8711 / NCTC 7292 / S-41).